The following is a 1025-amino-acid chain: MNPMRDQPGSPYGDSTPRSPFSPFSPLSVDDRHRNHADTKTPRSPFSPFSPLSGDERHKSLAESKFQQALASSGQLDPLSPGSMHHGGHKFHEVFQMKQGRYDLQASKISEMMKSSSLDNAPTQSLLSVLNGILDESIERKNGEIPQRVACLLRKVVQEIERRISTQAEHLRTQNNIFKTREEKYQSRINVLEALASGTGVEHEIATQQLRQIETEKSMWEEKKKHEEEDMVKLMKQNDQHNLEISALKQELETTKRKYEQQYSQIESQTKTEKSKWEEQKKNEEEDMDKLLKENDQFNLQISALRQELETTRKAYEQQCSQMESQTMVATTGLESRLKELEQEGKVVNTAKNALEERVKELEQMGKEAHSAKNALEEKIKQLQQMEKETKTANTSLEGKIQELEQNLVMWKTKVREMEKKSESNHQRWSQKELSYKSFIDNQSQALLELRSYSRSIKQEILKVQENYTDQFSQLGKKLIELSNAAENYHAVLTENRKLFNELQELKGNIRVFCRVRPFLPAQGAANTVVEYVGEDGELVVTNPTRPGKDGLRQFKFNKVYSPTASQADVFSDIRPLVRSVLDGYNVCIFAYGQTGSGKTYTMTGPDGSSEEDWGVNYRALNDLFKISQSRKGNISYEVGVQMVEIYNEQVLDLLSDDNSQKKTLGILSTTQQNGLAVPDASMYPVTSTSDVITLMDIGLQNRAVGSTALNERSSRSHSIVTVHVRGKDLKTGSVLYGNLHLVDLAGSERVDRSEVTGDRLREAQHINKSLSSLGDVIFSLASKSSHVPYRNSKLTQLLQTSLGGRAKTLMFVQLNPDATSYSESMSTLKFAERVSGVELGAAKTSKEGKDVRDLMEQLASLKDTIARKDEEIERLQHQPQRLQKSMMRRKSIGHTDDINSDTGEYSSQSRYSVTDGESLASSAEAEYDERLSEITSDAASMGTQGSIDVTKRPPRISDRAKSVTAKSSTSVTRPLDKLRKVATRTTSTVAKVTGLTSSSKGLASSSIKKTGSTSSLAKSSKRWA.

Disordered stretches follow at residues 1 to 87 (MNPM…MHHG) and 263 to 286 (YSQI…NEEE). The segment covering 15-28 (STPRSPFSPFSPLS) has biased composition (low complexity). Residues 29 to 41 (VDDRHRNHADTKT) show a composition bias toward basic and acidic residues. Over residues 42-53 (PRSPFSPFSPLS) the composition is skewed to low complexity. Residues 65–75 (KFQQALASSGQ) are compositionally biased toward polar residues. The stretch at 203–425 (HEIATQQLRQ…REMEKKSESN (223 aa)) forms a coiled coil. Residues 270-286 (TKTEKSKWEEQKKNEEE) are compositionally biased toward basic and acidic residues. One can recognise a Kinesin motor domain in the interval 509–838 (NIRVFCRVRP…LKFAERVSGV (330 aa)). 593-600 (GQTGSGKT) is an ATP binding site. Positions 847 to 879 (KEGKDVRDLMEQLASLKDTIARKDEEIERLQHQ) form a coiled coil. 3 disordered regions span residues 881-926 (QRLQ…SAEA), 939-977 (AASM…RPLD), and 994-1025 (TGLT…KRWA). Polar residues-rich tracts occupy residues 901–913 (SDTG…SRYS) and 939–948 (AASMGTQGSI). Positions 950–962 (VTKRPPRISDRAK) are enriched in basic and acidic residues. Composition is skewed to low complexity over residues 963 to 974 (SVTAKSSTSVTR) and 998 to 1016 (SSSK…STSS).

It belongs to the TRAFAC class myosin-kinesin ATPase superfamily. Kinesin family. KIN-14 subfamily.

This is Kinesin-like protein KIN-14P from Arabidopsis thaliana (Mouse-ear cress).